The sequence spans 880 residues: Alanine--tRNA ligase (880 aa).

Zn(2+) contacts are provided by His-563, His-567, Cys-665, and His-669.

Belongs to the class-II aminoacyl-tRNA synthetase family. Zn(2+) is required as a cofactor.

Its subcellular location is the cytoplasm. It carries out the reaction tRNA(Ala) + L-alanine + ATP = L-alanyl-tRNA(Ala) + AMP + diphosphate. In terms of biological role, catalyzes the attachment of alanine to tRNA(Ala) in a two-step reaction: alanine is first activated by ATP to form Ala-AMP and then transferred to the acceptor end of tRNA(Ala). Also edits incorrectly charged Ser-tRNA(Ala) and Gly-tRNA(Ala) via its editing domain. This Desulforudis audaxviator (strain MP104C) protein is Alanine--tRNA ligase.